The sequence spans 141 residues: Hemoglobin subunit alpha (141 aa).

The 141-residue stretch at Val1–Arg141 folds into the Globin domain. Position 3 is a phosphoserine (Ser3). N6-succinyllysine is present on residues Lys7 and Lys11. The residue at position 16 (Lys16) is an N6-acetyllysine; alternate. The residue at position 16 (Lys16) is an N6-succinyllysine; alternate. Tyr24 is modified (phosphotyrosine). Position 35 is a phosphoserine (Ser35). Lys40 is modified (N6-succinyllysine). Residue His58 participates in O2 binding. His87 is a heme b binding site. The residue at position 102 (Ser102) is a Phosphoserine. A Phosphothreonine modification is found at Thr108. Phosphoserine is present on residues Ser124 and Ser131. Residues Thr134 and Thr137 each carry the phosphothreonine modification. At Ser138 the chain carries Phosphoserine.

Belongs to the globin family. As to quaternary structure, heterotetramer of two alpha chains and two beta chains. In terms of tissue distribution, red blood cells.

Involved in oxygen transport from the lung to the various peripheral tissues. Its function is as follows. Hemopressin acts as an antagonist peptide of the cannabinoid receptor CNR1. Hemopressin-binding efficiently blocks cannabinoid receptor CNR1 and subsequent signaling. The protein is Hemoglobin subunit alpha (HBA) of Macrotus californicus (Californian leaf-nosed bat).